Consider the following 309-residue polypeptide: Taste receptor type 2 member 8 (309 aa).

Over M1 to N7 the chain is Extracellular. The chain crosses the membrane as a helical span at residues I8–A28. Topologically, residues L29 to N50 are cytoplasmic. The helical transmembrane segment at L51–L71 threads the bilayer. At Y72–Q82 the chain is on the extracellular side. A helical transmembrane segment spans residues I83–L103. Residues N104–R131 are Cytoplasmic-facing. Residues W132–L152 form a helical membrane-spanning segment. Over S153–T184 the chain is Extracellular. N167 carries N-linked (GlcNAc...) asparagine glycosylation. Residues L185 to V205 traverse the membrane as a helical segment. The Cytoplasmic portion of the chain corresponds to R206–S239. Residues F240–M260 form a helical membrane-spanning segment. Residues T261–A266 lie on the Extracellular side of the membrane. The chain crosses the membrane as a helical span at residues M267–I287. The Cytoplasmic segment spans residues L288–I309.

The protein belongs to the G-protein coupled receptor T2R family.

The protein resides in the membrane. In terms of biological role, receptor that may play a role in the perception of bitterness and is gustducin-linked. May play a role in sensing the chemical composition of the gastrointestinal content. The activity of this receptor may stimulate alpha gustducin, mediate PLC-beta-2 activation and lead to the gating of TRPM5. This Pongo pygmaeus (Bornean orangutan) protein is Taste receptor type 2 member 8 (TAS2R8).